A 569-amino-acid polypeptide reads, in one-letter code: MITVAAPEAQPQVAAAVDEAPPEAVTVFRSKLPDIDIPSHLPLHEYCFARAAELPDAPCLIAAATGRTYTFAETRLLCRRAAAALHRLGVGHGDRVMVLLQNCVEFAVAFFAASFLGAVTTAANPFCTPQEIHKQFKASGVKLILTQSVYVDKLRQHEAFPRIDACTVGDDTLTVITIDDDEATPEGCLPFWDLIADADEGSVPEVAISPDDPVALPFSSGTTGLPKGVVLTHRSVVSGVAQQVDGENPNLHMGAGDVALCVLPLFHIFSLNSVLLCAVRAGAAVALMPRFEMGAMLGAIERWRVTVAAVVPPLVLALAKNPFVERHDLSSIRIVLSGAAPLGKELEDALRARLPQAIFGQGYGMTEAGPVLSMCPAFAKEPTPAKSGSCGTVVRNAELKVVDPDTGFSLGRNLPGEICIRGPQIMKGYLNDPEATAATIDVEGWLHTGDIGYVDDDDEVFIVDRVKELIKFKGFQVPPAELESLLIAHPSIADAAVVPQKDDVAGEVPVAFVVRAADSDITEESIKEFISKQVVFYKRLHKVHFIHAIPKSASGKILRRELRAKLAAC.

Positions 219, 220, 221, 222, 223, and 227 each coordinate ATP. (E)-4-coumaroyl-AMP-binding residues include Phe269 and Ser273. Arg290 lines the CoA pocket. The tract at residues 292-361 (EMGAMLGAIE…ARLPQAIFGQ (70 aa)) is SBD1. (E)-4-coumaroyl-AMP-binding residues include Ala339, Gln361, Gly362, Thr366, and Met374. Residues Gln361, Gly362, and Thr366 each coordinate ATP. The segment at 362-429 (GYGMTEAGPV…IRGPQIMKGY (68 aa)) is SBD2. Positions 450 and 465 each coordinate ATP. Positions 467 and 471 each coordinate (E)-4-coumaroyl-AMP. Residues Lys473 and Gly474 each contribute to the CoA site. Position 556 (Lys556) interacts with ATP.

This sequence belongs to the ATP-dependent AMP-binding enzyme family. Mg(2+) is required as a cofactor. As to expression, expressed in roots, stems, leaf blades, leaf sheaths and spikelets.

The catalysed reaction is (E)-ferulate + ATP + CoA = (E)-feruloyl-CoA + AMP + diphosphate. It catalyses the reaction (E)-4-coumarate + ATP + CoA = (E)-4-coumaroyl-CoA + AMP + diphosphate. It carries out the reaction (E)-caffeate + ATP + CoA = (E)-caffeoyl-CoA + AMP + diphosphate. The enzyme catalyses (E)-cinnamate + ATP + CoA = (E)-cinnamoyl-CoA + AMP + diphosphate. The catalysed reaction is (E)-ferulate + ATP + H(+) = (E)-feruloyl-AMP + diphosphate. It catalyses the reaction (E)-feruloyl-AMP + CoA = (E)-feruloyl-CoA + AMP + H(+). It carries out the reaction (E)-4-coumarate + ATP + H(+) = (E)-4-coumaroyl-AMP + diphosphate. The enzyme catalyses (E)-4-coumaroyl-AMP + CoA = (E)-4-coumaroyl-CoA + AMP + H(+). The catalysed reaction is (E)-caffeate + ATP + H(+) = (E)-caffeoyl-AMP + diphosphate. It catalyses the reaction (E)-caffeoyl-AMP + CoA = (E)-caffeoyl-CoA + AMP + H(+). It participates in phytoalexin biosynthesis; 3,4',5-trihydroxystilbene biosynthesis; 3,4',5-trihydroxystilbene from trans-4-coumarate: step 1/2. Functionally, involved in the phenylpropanoid metabolism by mediating the activation of a number of hydroxycinnamates for the biosynthesis of monolignols and other phenolic secondary metabolites. Catalyzes the formation of CoA esters of cinnamate, 4-coumarate, caffeate and ferulate. Is more efficient with substrates in the following order: ferulate &gt; 4-coumarate &gt; caffeate &gt; cinnamate. Cannot convert sinapate to its corresponding CoA ester. Follows a two-step reaction mechanism, wherein the carboxylate substrate first undergoes adenylation by ATP, followed by a thioesterification in the presence of CoA to yield the final CoA thioester. The protein is 4-coumarate--CoA ligase 2 of Oryza sativa subsp. japonica (Rice).